A 240-amino-acid chain; its full sequence is UDP-2,3-diacylglucosamine hydrolase (240 aa).

Mn(2+)-binding residues include Asp-8, His-10, Asp-41, Asn-79, and His-114. 79–80 (NR) contacts substrate. Substrate is bound by residues Asp-122, Ser-160, Asn-164, Lys-167, and His-195. The Mn(2+) site is built by His-195 and His-197.

This sequence belongs to the LpxH family. Requires Mn(2+) as cofactor.

It is found in the cell inner membrane. The enzyme catalyses UDP-2-N,3-O-bis[(3R)-3-hydroxytetradecanoyl]-alpha-D-glucosamine + H2O = 2-N,3-O-bis[(3R)-3-hydroxytetradecanoyl]-alpha-D-glucosaminyl 1-phosphate + UMP + 2 H(+). It functions in the pathway glycolipid biosynthesis; lipid IV(A) biosynthesis; lipid IV(A) from (3R)-3-hydroxytetradecanoyl-[acyl-carrier-protein] and UDP-N-acetyl-alpha-D-glucosamine: step 4/6. Its function is as follows. Hydrolyzes the pyrophosphate bond of UDP-2,3-diacylglucosamine to yield 2,3-diacylglucosamine 1-phosphate (lipid X) and UMP by catalyzing the attack of water at the alpha-P atom. Involved in the biosynthesis of lipid A, a phosphorylated glycolipid that anchors the lipopolysaccharide to the outer membrane of the cell. The sequence is that of UDP-2,3-diacylglucosamine hydrolase from Serratia proteamaculans (strain 568).